The following is a 276-amino-acid chain: MSEMQMDCALDLMRRLPPQQIEKNLIDLIDLAPDLCEDLLSSVDQPLKIAKDKEHGKDYLLCDYNRDGDSYRSPWSNSYYPPLEDGQMPSERLRKLEIEANYAFDQYREMYYEGGVSSVYLWDLDHGFAAVILIKKAGDGSKMIRGCWDSIHVVEVQEKTTGRTAHYKLTSTAMLWLQTNKQGSGTMNLGGSLTRQQEQDANVSESSPHIANIGKMVEEMENKIRNTLNEIYFGKTKDIVNGLRSTQSLADQRQQAAMKQDLAAAILRRNVKPESN.

It belongs to the F-actin-capping protein beta subunit family. In terms of assembly, component of the F-actin capping complex, composed of a heterodimer of an alpha and a beta subunit. Subunit of dynactin, a multiprotein complex part of a tripartite complex with dynein and a adapter, such as BICDL1, BICD2 or HOOK3.

It localises to the cytoplasm. Its subcellular location is the cytoskeleton. Functionally, F-actin-capping proteins bind in a Ca(2+)-independent manner to the fast growing ends of actin filaments (barbed end) thereby blocking the exchange of subunits at these ends. Unlike other capping proteins (such as gelsolin and severin), these proteins do not sever actin filaments. Forms, with CAPZB, the barbed end of the fast growing ends of actin filaments in the dynactin complex and stabilizes dynactin structure. The dynactin multiprotein complex activates the molecular motor dynein for ultra-processive transport along microtubules. The polypeptide is F-actin-capping protein subunit beta (cpb) (Drosophila melanogaster (Fruit fly)).